We begin with the raw amino-acid sequence, 388 residues long: Formate-dependent phosphoribosylglycinamide formyltransferase (388 aa).

N(1)-(5-phospho-beta-D-ribosyl)glycinamide is bound by residues 20–21 and Glu-80; that span reads EL. Residues Arg-112, Lys-153, 158–163, 193–196, and Glu-201 contribute to the ATP site; these read SSGKGQ and EEFI. Residues 117–306 form the ATP-grasp domain; it reads RLAFEKLGLR…EFEIHARAIL (190 aa). 2 residues coordinate Mg(2+): Glu-265 and Glu-277. N(1)-(5-phospho-beta-D-ribosyl)glycinamide contacts are provided by residues Asp-284, Lys-352, and 359 to 360; that span reads RR.

This sequence belongs to the PurK/PurT family. As to quaternary structure, homodimer.

It carries out the reaction N(1)-(5-phospho-beta-D-ribosyl)glycinamide + formate + ATP = N(2)-formyl-N(1)-(5-phospho-beta-D-ribosyl)glycinamide + ADP + phosphate + H(+). Its pathway is purine metabolism; IMP biosynthesis via de novo pathway; N(2)-formyl-N(1)-(5-phospho-D-ribosyl)glycinamide from N(1)-(5-phospho-D-ribosyl)glycinamide (formate route): step 1/1. In terms of biological role, involved in the de novo purine biosynthesis. Catalyzes the transfer of formate to 5-phospho-ribosyl-glycinamide (GAR), producing 5-phospho-ribosyl-N-formylglycinamide (FGAR). Formate is provided by PurU via hydrolysis of 10-formyl-tetrahydrofolate. The polypeptide is Formate-dependent phosphoribosylglycinamide formyltransferase (Methanococcus maripaludis (strain C5 / ATCC BAA-1333)).